A 162-amino-acid polypeptide reads, in one-letter code: NADH-quinone oxidoreductase subunit I 1 (162 aa).

2 consecutive 4Fe-4S ferredoxin-type domains span residues 44–74 (LRTY…VQAA) and 90–119 (YKYQ…LTQE). [4Fe-4S] cluster contacts are provided by Cys54, Cys57, Cys60, Cys64, Cys99, Cys102, Cys105, and Cys109.

This sequence belongs to the complex I 23 kDa subunit family. In terms of assembly, NDH-1 is composed of 14 different subunits. Subunits NuoA, H, J, K, L, M, N constitute the membrane sector of the complex. It depends on [4Fe-4S] cluster as a cofactor.

Its subcellular location is the cell membrane. The catalysed reaction is a quinone + NADH + 5 H(+)(in) = a quinol + NAD(+) + 4 H(+)(out). Functionally, NDH-1 shuttles electrons from NADH, via FMN and iron-sulfur (Fe-S) centers, to quinones in the respiratory chain. The immediate electron acceptor for the enzyme in this species is believed to be ubiquinone. Couples the redox reaction to proton translocation (for every two electrons transferred, four hydrogen ions are translocated across the cytoplasmic membrane), and thus conserves the redox energy in a proton gradient. The polypeptide is NADH-quinone oxidoreductase subunit I 1 (Symbiobacterium thermophilum (strain DSM 24528 / JCM 14929 / IAM 14863 / T)).